Here is a 280-residue protein sequence, read N- to C-terminus: Fasciclin-like arabinogalactan protein 3 (280 aa).

The N-terminal stretch at 1-24 is a signal peptide; sequence MGLKVSSSLLCLTILLAVSSIVSA. The 145-residue stretch at 25–169 folds into the FAS1 domain; that stretch reads VNITRVLEKY…LSVVQISMPI (145 aa). N-linked (GlcNAc...) asparagine glycosylation is found at Asn26, Asn126, and Asn159. Positions 180 to 193 are enriched in pro residues; sequence VPPPPPMSSPPAPS. The interval 180–262 is disordered; sequence VPPPPPMSSP…EPPSSASNTG (83 aa). Over residues 219–234 the composition is skewed to low complexity; that stretch reads APETAPASAPSESDSP. The GPI-anchor amidated serine moiety is linked to residue Ser256. Residues 257-280 constitute a propeptide, removed in mature form; the sequence is SASNTGLSFGAVLVLGFVASFVGF.

This sequence belongs to the fasciclin-like AGP family.

Its subcellular location is the cell membrane. Its function is as follows. May be a cell surface adhesion protein. The sequence is that of Fasciclin-like arabinogalactan protein 3 (FLA3) from Arabidopsis thaliana (Mouse-ear cress).